The sequence spans 156 residues: Small ribosomal subunit protein uS7 (156 aa).

This sequence belongs to the universal ribosomal protein uS7 family. Part of the 30S ribosomal subunit. Contacts proteins S9 and S11.

Its function is as follows. One of the primary rRNA binding proteins, it binds directly to 16S rRNA where it nucleates assembly of the head domain of the 30S subunit. Is located at the subunit interface close to the decoding center, probably blocks exit of the E-site tRNA. This is Small ribosomal subunit protein uS7 from Macrococcus caseolyticus (strain JCSC5402) (Macrococcoides caseolyticum).